Consider the following 303-residue polypeptide: Holdfast attachment protein D (303 aa).

The span at S266–F281 shows a compositional bias: polar residues. The segment at S266–R303 is disordered. Residues R282–R303 are compositionally biased toward low complexity.

Its subcellular location is the cell outer membrane. Functionally, involved in attachment of the holdfast to the cell. The holdfast is a structure that allows the bacteria to firmly adhere to surfaces. This is Holdfast attachment protein D (hfaD) from Caulobacter vibrioides (strain ATCC 19089 / CIP 103742 / CB 15) (Caulobacter crescentus).